We begin with the raw amino-acid sequence, 168 residues long: Disulfide bond formation protein B (168 aa).

The Cytoplasmic portion of the chain corresponds to 1-13 (MFLTYFDAMPRRV). Residues 14–30 (LALVSLACVALLAFGLY) traverse the membrane as a helical segment. Over 31-48 (LQHVVGLEPCPMCIVQRY) the chain is Periplasmic. The cysteines at positions 40 and 43 are disulfide-linked. A helical membrane pass occupies residues 49–64 (ALVLVAVVAGITAVAK). The Cytoplasmic segment spans residues 65–70 (SRGLLI). A helical transmembrane segment spans residues 71 to 88 (TGSGLLVLLSGFGAFVAA). The Periplasmic segment spans residues 89–144 (RQSFLQWYPPEVASCGRDFYGMIETFPLKRAIPMIFKGSGDCTKIDWTFLGLSIAN). The cysteines at positions 103 and 130 are disulfide-linked. Residues 145 to 163 (WSFLCFVAIALVGLVLITR) traverse the membrane as a helical segment. The Cytoplasmic portion of the chain corresponds to 164-168 (LARQR).

It belongs to the DsbB family.

Its subcellular location is the cell inner membrane. Its function is as follows. Required for disulfide bond formation in some periplasmic proteins. Acts by oxidizing the DsbA protein. The chain is Disulfide bond formation protein B from Polaromonas sp. (strain JS666 / ATCC BAA-500).